The following is a 589-amino-acid chain: UvrABC system protein C (589 aa).

A GIY-YIG domain is found at 14-91 (HKPGCYLWKD…IAKYKPKYNM (78 aa)).

It belongs to the UvrC family. As to quaternary structure, interacts with UvrB in an incision complex.

The protein resides in the cytoplasm. The UvrABC repair system catalyzes the recognition and processing of DNA lesions. UvrC both incises the 5' and 3' sides of the lesion. The N-terminal half is responsible for the 3' incision and the C-terminal half is responsible for the 5' incision. The polypeptide is UvrABC system protein C (Malacoplasma penetrans (strain HF-2) (Mycoplasma penetrans)).